Consider the following 236-residue polypeptide: UPF0257 lipoprotein YnfC (236 aa).

An N-terminal signal peptide occupies residues M1 to G16. A lipid anchor (N-palmitoyl cysteine) is attached at C17. The S-diacylglycerol cysteine moiety is linked to residue C17.

Belongs to the UPF0257 family.

It localises to the cell membrane. The polypeptide is UPF0257 lipoprotein YnfC (Salmonella heidelberg (strain SL476)).